The following is a 196-amino-acid chain: MKLNLNTDFTKFPRAVSVLAAGEAGAAPAFAKAVLAHDERHLRRRAVELTDGSKVLVDLPEPVALNDGDRLVLEDGRHVEIIAAPEEVYDIRARDGVHLTELAWHIGNRHLAAGIEADRIVILRDHVIKAMLEGLGATVREVSEPFKPVRGAYSGGHDHGHAHAHSHAEAHSHAHGESHSHSHSHSHDDHHHHDHD.

The disordered stretch occupies residues 150–196; that stretch reads RGAYSGGHDHGHAHAHSHAEAHSHAHGESHSHSHSHSHDDHHHHDHD. Positions 156 to 196 are enriched in basic and acidic residues; that stretch reads GHDHGHAHAHSHAEAHSHAHGESHSHSHSHSHDDHHHHDHD.

It belongs to the UreE family.

It localises to the cytoplasm. Its function is as follows. Involved in urease metallocenter assembly. Binds nickel. Probably functions as a nickel donor during metallocenter assembly. The polypeptide is Urease accessory protein UreE (Mesorhizobium japonicum (strain LMG 29417 / CECT 9101 / MAFF 303099) (Mesorhizobium loti (strain MAFF 303099))).